We begin with the raw amino-acid sequence, 37 residues long: Large ribosomal subunit protein bL36 (37 aa).

The protein belongs to the bacterial ribosomal protein bL36 family.

The chain is Large ribosomal subunit protein bL36 from Bifidobacterium adolescentis (strain ATCC 15703 / DSM 20083 / NCTC 11814 / E194a).